The sequence spans 107 residues: UPF0122 protein MYPE4850 (107 aa).

It belongs to the UPF0122 family.

Might take part in the signal recognition particle (SRP) pathway. This is inferred from the conservation of its genetic proximity to ftsY/ffh. May be a regulatory protein. The sequence is that of UPF0122 protein MYPE4850 from Malacoplasma penetrans (strain HF-2) (Mycoplasma penetrans).